The primary structure comprises 891 residues: Probable serine/threonine-protein kinase mkcC (891 aa).

5 disordered regions span residues 24–70 (IELN…TATI), 85–121 (ANNN…APSS), 264–435 (DDPQ…AREK), 495–526 (NSLG…PEVS), and 565–588 (TTAS…DDYD). Residues 29-41 (QEEQQQPEQQEQP) are compositionally biased toward low complexity. Residues 45–58 (EELKDNNEKIKTSE) are compositionally biased toward basic and acidic residues. Low complexity-rich tracts occupy residues 61–70 (TTTTTTTATI), 86–105 (NNNT…LNNN), 297–314 (STSN…TTGK), 322–360 (SNSS…SGTS), and 379–397 (TTGN…TTSS). Positions 422–432 (RKRKEQKRSRA) are enriched in basic residues. Low complexity predominate over residues 495 to 522 (NSLGSSINKNNSNNTTTTTTTTNTNNKS). The region spanning 616-864 (YKNLKQIGSG…AEQLLKHPWI (249 aa)) is the Protein kinase domain. Residues 622-630 (IGSGGFGSV) and lysine 645 contribute to the ATP site. Catalysis depends on aspartate 735, which acts as the Proton acceptor.

It belongs to the protein kinase superfamily. STE Ser/Thr protein kinase family. STE20 subfamily. Requires Mg(2+) as cofactor.

It catalyses the reaction L-seryl-[protein] + ATP = O-phospho-L-seryl-[protein] + ADP + H(+). The catalysed reaction is L-threonyl-[protein] + ATP = O-phospho-L-threonyl-[protein] + ADP + H(+). The protein is Probable serine/threonine-protein kinase mkcC of Dictyostelium discoideum (Social amoeba).